Here is a 118-residue protein sequence, read N- to C-terminus: Large ribosomal subunit protein bL20 (118 aa).

The protein belongs to the bacterial ribosomal protein bL20 family.

Functionally, binds directly to 23S ribosomal RNA and is necessary for the in vitro assembly process of the 50S ribosomal subunit. It is not involved in the protein synthesizing functions of that subunit. The sequence is that of Large ribosomal subunit protein bL20 from Marinomonas sp. (strain MWYL1).